Here is an 899-residue protein sequence, read N- to C-terminus: MTDKSIKELALSVGRPVEKLLEQAREAGLPQRTADDIITTEQQDTLVNYLKKVHGQESGNTGKIALKRKTTSTAKVASTSGKAKTINVEVRKKQVFAKPNPEQIAAEAKARAEAEAKARAEQQAREAAEQKARLQTEQKAKATLDAMRAAHQQDSAAQSAPKAAVVVEKRGGGTVKPAPKPAETLEQKKAREAQTAQLKATEEAARRKAAEEAQQRTLEQMRKMASKYSNDDATATIRVIDDSPLASGLVGQAYEDSFNQEDREIKRGGATTNPRAGKKGGRRGQEEQSFVNHNKRGLKSSQANKHGFEKPVKKQVYDVEIGSSIVVADLAQKMAIKVREVIKTLMKMGELVNQNQTIDQDTAALVVEEMGHNPVLVSDTQAEDNLLEAAEEARGEQTTRPPVVTIMGHVDHGKTSLLDRIRRSKVAAGEAGGITQHIGAYHVETDKGIITFLDTPGHAAFTSMRARGAKATDIVVLVVAADDGVMPQTAEAIDHARAAGTPIIVAINKMDKESADPDRVLNELTTKEIVPEEWGGDVPVAKVSAHTGQGIDELLDLILIQSELMELKASAEGAAQGVVIEARVDKGRGAVTSILVQNGTLNIGDLVLAGSSYGRVRAMSDENGKPIKSAGPSIPVEILGLPEAPMAGDEVLVVNDEKKAREVADARADREREKRIERQSAMRLENIMASMGKKDVPTVNVVLRTDVRGTLEALNAALHELSTDEVKVRVISSGVGAITESDVILAESSEAVLLGFNVRADTAARQKSDQDGIDIRYYSIIYELIDDVKDAMSGKLAPEHRETILGVAQVREVFRSSKFGAAAGCMVMEGVIHRNKPIRVLRDDVVIFQGELESLRRYKDVVDEVRAGMECGLAVKGYNDIKPLDKIEVYDVQIVKRSL.

3 disordered regions span residues 115 to 137 (EAKA…LQTE), 170 to 189 (RGGG…EQKK), and 262 to 309 (DREI…HGFE). Positions 399–568 (TRPPVVTIMG…LIQSELMELK (170 aa)) constitute a tr-type G domain. Residues 408–415 (GHVDHGKT) form a G1 region. A GTP-binding site is contributed by 408–415 (GHVDHGKT). The interval 433–437 (GITQH) is G2. A G3 region spans residues 454-457 (DTPG). Residues 454–458 (DTPGH) and 508–511 (NKMD) each bind GTP. The tract at residues 508-511 (NKMD) is G4. Positions 544-546 (SAH) are G5.

The protein belongs to the TRAFAC class translation factor GTPase superfamily. Classic translation factor GTPase family. IF-2 subfamily.

It is found in the cytoplasm. One of the essential components for the initiation of protein synthesis. Protects formylmethionyl-tRNA from spontaneous hydrolysis and promotes its binding to the 30S ribosomal subunits. Also involved in the hydrolysis of GTP during the formation of the 70S ribosomal complex. The protein is Translation initiation factor IF-2 of Acinetobacter baumannii (strain SDF).